The following is a 137-amino-acid chain: Putative pre-16S rRNA nuclease (137 aa).

Belongs to the YqgF nuclease family.

The protein resides in the cytoplasm. Could be a nuclease involved in processing of the 5'-end of pre-16S rRNA. This chain is Putative pre-16S rRNA nuclease, found in Buchnera aphidicola subsp. Baizongia pistaciae (strain Bp).